A 158-amino-acid polypeptide reads, in one-letter code: Cyclic pyranopterin monophosphate synthase (158 aa).

Substrate contacts are provided by residues 75 to 77 (LCH) and 113 to 114 (ME). D128 is an active-site residue.

It belongs to the MoaC family. As to quaternary structure, homohexamer; trimer of dimers.

It carries out the reaction (8S)-3',8-cyclo-7,8-dihydroguanosine 5'-triphosphate = cyclic pyranopterin phosphate + diphosphate. The protein operates within cofactor biosynthesis; molybdopterin biosynthesis. Its function is as follows. Catalyzes the conversion of (8S)-3',8-cyclo-7,8-dihydroguanosine 5'-triphosphate to cyclic pyranopterin monophosphate (cPMP). This Histophilus somni (strain 129Pt) (Haemophilus somnus) protein is Cyclic pyranopterin monophosphate synthase.